We begin with the raw amino-acid sequence, 454 residues long: Ribosomal protein uS12 methylthiotransferase RimO (454 aa).

Residues 19–129 (AKVGFVSLGC…VLAQVHEHVA (111 aa)) enclose the MTTase N-terminal domain. Residues C28, C64, C93, C161, C165, and C168 each coordinate [4Fe-4S] cluster. The 238-residue stretch at 147 to 384 (LTPKHYAYLK…MAVQAKISSD (238 aa)) folds into the Radical SAM core domain. A TRAM domain is found at 387 to 453 (QVRIGQEYLI…EHDVWGVRVE (67 aa)).

Belongs to the methylthiotransferase family. RimO subfamily. It depends on [4Fe-4S] cluster as a cofactor.

The protein localises to the cytoplasm. The enzyme catalyses L-aspartate(89)-[ribosomal protein uS12]-hydrogen + (sulfur carrier)-SH + AH2 + 2 S-adenosyl-L-methionine = 3-methylsulfanyl-L-aspartate(89)-[ribosomal protein uS12]-hydrogen + (sulfur carrier)-H + 5'-deoxyadenosine + L-methionine + A + S-adenosyl-L-homocysteine + 2 H(+). Its function is as follows. Catalyzes the methylthiolation of an aspartic acid residue of ribosomal protein uS12. The sequence is that of Ribosomal protein uS12 methylthiotransferase RimO from Colwellia psychrerythraea (strain 34H / ATCC BAA-681) (Vibrio psychroerythus).